The chain runs to 666 residues: LEAF RUST 10 DISEASE-RESISTANCE LOCUS RECEPTOR-LIKE PROTEIN KINASE-like 2.5 (666 aa).

Residues Met-1 to Ser-30 form the signal peptide. Topologically, residues Ala-31 to Leu-275 are extracellular. N-linked (GlcNAc...) asparagine glycosylation is found at Asn-119, Asn-141, Asn-171, and Asn-198. Residues Phe-276 to Ile-296 form a helical membrane-spanning segment. The Cytoplasmic segment spans residues Leu-297 to Ala-666. In terms of domain architecture, Protein kinase spans Lys-348–Leu-636. Residues Ile-354–Val-362 and Lys-376 each bind ATP. Tyr-420 is modified (phosphotyrosine). Asp-471 acts as the Proton acceptor in catalysis. Thr-508 and Thr-511 each carry phosphothreonine.

Belongs to the protein kinase superfamily. Ser/Thr protein kinase family.

The protein resides in the membrane. The enzyme catalyses L-seryl-[protein] + ATP = O-phospho-L-seryl-[protein] + ADP + H(+). It carries out the reaction L-threonyl-[protein] + ATP = O-phospho-L-threonyl-[protein] + ADP + H(+). In Arabidopsis thaliana (Mouse-ear cress), this protein is LEAF RUST 10 DISEASE-RESISTANCE LOCUS RECEPTOR-LIKE PROTEIN KINASE-like 2.5.